A 309-amino-acid chain; its full sequence is Porphobilinogen deaminase (309 aa).

Cysteine 242 carries the post-translational modification S-(dipyrrolylmethanemethyl)cysteine.

This sequence belongs to the HMBS family. Monomer. Requires dipyrromethane as cofactor.

It carries out the reaction 4 porphobilinogen + H2O = hydroxymethylbilane + 4 NH4(+). Its pathway is porphyrin-containing compound metabolism; protoporphyrin-IX biosynthesis; coproporphyrinogen-III from 5-aminolevulinate: step 2/4. In terms of biological role, tetrapolymerization of the monopyrrole PBG into the hydroxymethylbilane pre-uroporphyrinogen in several discrete steps. The sequence is that of Porphobilinogen deaminase from Actinobacillus succinogenes (strain ATCC 55618 / DSM 22257 / CCUG 43843 / 130Z).